The chain runs to 931 residues: Valine--tRNA ligase (931 aa).

A 'HIGH' region motif is present at residues 42 to 52; that stretch reads PNVTGSLHMGH. Residues 523–527 carry the 'KMSKS' region motif; sequence KMSKS. Lys526 contributes to the ATP binding site. Residues 859–931 adopt a coiled-coil conformation; sequence MAGLIDKEAE…EEQLEKIKYL (73 aa).

The protein belongs to the class-I aminoacyl-tRNA synthetase family. ValS type 1 subfamily. Monomer.

Its subcellular location is the cytoplasm. The enzyme catalyses tRNA(Val) + L-valine + ATP = L-valyl-tRNA(Val) + AMP + diphosphate. Functionally, catalyzes the attachment of valine to tRNA(Val). As ValRS can inadvertently accommodate and process structurally similar amino acids such as threonine, to avoid such errors, it has a 'posttransfer' editing activity that hydrolyzes mischarged Thr-tRNA(Val) in a tRNA-dependent manner. This chain is Valine--tRNA ligase, found in Alcanivorax borkumensis (strain ATCC 700651 / DSM 11573 / NCIMB 13689 / SK2).